Consider the following 80-residue polypeptide: Cytochrome c oxidase subunit 7B, mitochondrial (80 aa).

The transit peptide at 1–24 directs the protein to the mitochondrion; it reads MFPLVKSALNRLQVRSIQQTMARQ. Topologically, residues 25–32 are mitochondrial matrix; sequence SHQKRTPD. A helical membrane pass occupies residues 33–59; it reads FHDKYGNAVLASGATFCIVTWTYVATQ. Residues 60–80 are Mitochondrial intermembrane-facing; that stretch reads VGIEWNLSPVGRVTPKEWRNQ.

It belongs to the cytochrome c oxidase VIIb family. Component of the cytochrome c oxidase (complex IV, CIV), a multisubunit enzyme composed of 14 subunits. The complex is composed of a catalytic core of 3 subunits MT-CO1, MT-CO2 and MT-CO3, encoded in the mitochondrial DNA, and 11 supernumerary subunits COX4I1 (or COX4I2), COX5A, COX5B, COX6A1 (or COX6A2), COX6B1 (or COX6B2), COX6C, COX7A2 (or COX7A1), COX7B, COX7C, COX8A and NDUFA4, which are encoded in the nuclear genome. The complex exists as a monomer or a dimer and forms supercomplexes (SCs) in the inner mitochondrial membrane with NADH-ubiquinone oxidoreductase (complex I, CI) and ubiquinol-cytochrome c oxidoreductase (cytochrome b-c1 complex, complex III, CIII), resulting in different assemblies (supercomplex SCI(1)III(2)IV(1) and megacomplex MCI(2)III(2)IV(2)).

It localises to the mitochondrion inner membrane. It participates in energy metabolism; oxidative phosphorylation. Component of the cytochrome c oxidase, the last enzyme in the mitochondrial electron transport chain which drives oxidative phosphorylation. The respiratory chain contains 3 multisubunit complexes succinate dehydrogenase (complex II, CII), ubiquinol-cytochrome c oxidoreductase (cytochrome b-c1 complex, complex III, CIII) and cytochrome c oxidase (complex IV, CIV), that cooperate to transfer electrons derived from NADH and succinate to molecular oxygen, creating an electrochemical gradient over the inner membrane that drives transmembrane transport and the ATP synthase. Cytochrome c oxidase is the component of the respiratory chain that catalyzes the reduction of oxygen to water. Electrons originating from reduced cytochrome c in the intermembrane space (IMS) are transferred via the dinuclear copper A center (CU(A)) of subunit 2 and heme A of subunit 1 to the active site in subunit 1, a binuclear center (BNC) formed by heme A3 and copper B (CU(B)). The BNC reduces molecular oxygen to 2 water molecules using 4 electrons from cytochrome c in the IMS and 4 protons from the mitochondrial matrix. Plays a role in proper central nervous system (CNS) development in vertebrates. The sequence is that of Cytochrome c oxidase subunit 7B, mitochondrial (COX7B) from Homo sapiens (Human).